A 320-amino-acid chain; its full sequence is Biotin synthase 2 (320 aa).

In terms of domain architecture, Radical SAM core spans 34–261; that stretch reads NVVQCSKLLS…ASYVRLSAGR (228 aa). Residues Cys49, Cys53, and Cys56 each coordinate [4Fe-4S] cluster. Residues Cys93, Cys124, Cys184, and Arg256 each contribute to the [2Fe-2S] cluster site.

It belongs to the radical SAM superfamily. Biotin synthase family. In terms of assembly, homodimer. Requires [4Fe-4S] cluster as cofactor. The cofactor is [2Fe-2S] cluster.

It catalyses the reaction (4R,5S)-dethiobiotin + (sulfur carrier)-SH + 2 reduced [2Fe-2S]-[ferredoxin] + 2 S-adenosyl-L-methionine = (sulfur carrier)-H + biotin + 2 5'-deoxyadenosine + 2 L-methionine + 2 oxidized [2Fe-2S]-[ferredoxin]. The protein operates within cofactor biosynthesis; biotin biosynthesis; biotin from 7,8-diaminononanoate: step 2/2. Functionally, catalyzes the conversion of dethiobiotin (DTB) to biotin by the insertion of a sulfur atom into dethiobiotin via a radical-based mechanism. The polypeptide is Biotin synthase 2 (Paracoccus denitrificans (strain Pd 1222)).